A 99-amino-acid chain; its full sequence is Imizoquin biosynthesis cluster protein A (99 aa).

It functions in the pathway secondary metabolite biosynthesis. In terms of biological role, part of the gene cluster that mediates the biosynthesis of imizoquins A to D, tripeptide-derived alkaloids that serve a protective role against oxidative stress that are essential for normal germination. ImqB is a canonical three-module NRPS that assembles the tripeptide backbone of the imizoquins via condensation of Trp, Tyr, and Leu-derived precursors. N-methylation by imqF and phenol oxidation by imqC, followed by cyclization via the FAD-dependent oxidase imqH carry out the three-step transformation of L-tyrosine into tetrahydroisoquinoline. Importantly, this sequence requires the presence of a free amine in the tyrosine moiety, indicating that isoquinoline formation occurs prior to peptide bond formation. The imidazolidin-4-one ring of imizoquins could form following additional oxidation of the methyl-derived bridgehead carbon by imqH. Lastly, O-methylation by imqG and leucine hydroxylation by imqE complete biosynthesis of the imizoquins. The protein is Imizoquin biosynthesis cluster protein A of Aspergillus flavus (strain ATCC 200026 / FGSC A1120 / IAM 13836 / NRRL 3357 / JCM 12722 / SRRC 167).